A 300-amino-acid chain; its full sequence is Transcription initiation factor IIB 1 (300 aa).

Residues 3–34 (GKRVCPVCGSTEFIYDPSRGEIVCKVCGYVIE) form a TFIIB-type zinc finger. The Zn(2+) site is built by cysteine 7, cysteine 10, cysteine 26, and cysteine 29. 2 consecutive repeat copies span residues 114–197 (SELD…ARHL) and 210–291 (DYVN…ELVE).

The protein belongs to the TFIIB family.

Stabilizes TBP binding to an archaeal box-A promoter. Also responsible for recruiting RNA polymerase II to the pre-initiation complex (DNA-TBP-TFIIB). The protein is Transcription initiation factor IIB 1 of Thermococcus kodakarensis (strain ATCC BAA-918 / JCM 12380 / KOD1) (Pyrococcus kodakaraensis (strain KOD1)).